The sequence spans 1032 residues: MFKWLGKLLGDPNAKVVKKMQPTLDEINALEPKMKALSDEQLREKTAELRTRFAELTKADREALDDRYADENRHDSTVEKDYQKELRVIEDAALDELLPEAFALVREASSRVIGQRHYDVQMIGGIVLHEGRIAEMKTGEGKTLVASLPLFLNAIAGRGAHLITVNDYLAKVGGGWMGPIFHSLGMSTGYIAHDYSAIYDPNYIDPNAKQDDSRLVHWRPCSRREAYMADMTYGTNNEYGFDYLRDNMVQHKDQCVQRELHYAIVDEVDNILIDEARTPLIISGPAQESSDNYRRFSSLVRGLKRSSISPDEVRKGLKDDFDGDYWIDEKSRSITLTESGLEVMEKRLNLPDGENMYDAKNFELTHYLENALKAEYVFHRDVDYVVQNGEVVIVDEFTGRTMPGRRWSDGLHQAVEAKEAVEVRRENVTLATITFQNYFRMYNKLGGMTGTAITEAEEFSKIYNLEVVIIPTNRQVVREDYRDHIYASQKAKYNAVLREIKEMHEVGRPVLVGTTSVESSEIVSNLLKQEGLEHYLLNAKQHEREAYIVAQAGRTGAITIATNMAGRGTDILLGGNPDGLIEEHLKALGTTITDATPEQLAQAQAQAKADVEAERKAVMEAGGLHIIGTERHEARRIDNQLRGRAGRQGDPGSSRFFISLEDELMTRFGRIDTIKRLMERMSDGDEELPLESGLLDKAIESAQTRVEGYNFDVRKHVVEYDDVVNKQREVIYADRHAILGGEDMGDRILEMVVDEIDIHVEEFLDNRELDKPDLEGFLRQLYSIVPQLKAQETELAARFKGKQADEIGEIATEVVEEAYNRLGEELATQYTTLLQRGVQPIPGVSGPEAFFAHFERQEMLGAIDREWIDYLTAVDELRQGIGNVAIAQQDPLVAFKREAFKMFDELKGNIQNRIVYNFFTDAANWQVRLRQVELEMEARLALAQTAGGSENATEDAPKPAKRGVGGAARRVSNAAGQAAPARRIVIKIGRNDPCPCDSGKKFKACHGLPGKEAELEAILAVKHTHAQAVGKK.

Residues Q121, 139-143 (GEGKT), and D570 contribute to the ATP site. The disordered stretch occupies residues 945–975 (TAGGSENATEDAPKPAKRGVGGAARRVSNAA). Zn(2+) contacts are provided by C994, C996, C1005, and H1006.

It belongs to the SecA family. In terms of assembly, monomer and homodimer. Part of the essential Sec protein translocation apparatus which comprises SecA, SecYEG and auxiliary proteins SecDF. Other proteins may also be involved. The cofactor is Zn(2+).

Its subcellular location is the cell membrane. It localises to the cytoplasm. The enzyme catalyses ATP + H2O + cellular proteinSide 1 = ADP + phosphate + cellular proteinSide 2.. Functionally, part of the Sec protein translocase complex. Interacts with the SecYEG preprotein conducting channel. Has a central role in coupling the hydrolysis of ATP to the transfer of proteins into and across the cell membrane, serving as an ATP-driven molecular motor driving the stepwise translocation of polypeptide chains across the membrane. This is Protein translocase subunit SecA from Herpetosiphon aurantiacus (strain ATCC 23779 / DSM 785 / 114-95).